A 499-amino-acid polypeptide reads, in one-letter code: Probable malate:quinone oxidoreductase 4 (499 aa).

The protein belongs to the MQO family. FAD is required as a cofactor.

The catalysed reaction is (S)-malate + a quinone = a quinol + oxaloacetate. The protein operates within carbohydrate metabolism; tricarboxylic acid cycle; oxaloacetate from (S)-malate (quinone route): step 1/1. The polypeptide is Probable malate:quinone oxidoreductase 4 (Staphylococcus epidermidis (strain ATCC 35984 / DSM 28319 / BCRC 17069 / CCUG 31568 / BM 3577 / RP62A)).